Here is a 71-residue protein sequence, read N- to C-terminus: Small ribosomal subunit protein bS21 (71 aa).

This sequence belongs to the bacterial ribosomal protein bS21 family.

The protein is Small ribosomal subunit protein bS21 of Hydrogenovibrio crunogenus (strain DSM 25203 / XCL-2) (Thiomicrospira crunogena).